Consider the following 160-residue polypeptide: Cytochrome b6-f complex subunit 4 (160 aa).

A run of 3 helical transmembrane segments spans residues 36–56 (LLYM…GLAV), 95–115 (LLGV…PFIE), and 131–151 (TVFL…TLPI).

The protein belongs to the cytochrome b family. PetD subfamily. The 4 large subunits of the cytochrome b6-f complex are cytochrome b6, subunit IV (17 kDa polypeptide, petD), cytochrome f and the Rieske protein, while the 4 small subunits are petG, petL, petM and petN. The complex functions as a dimer.

It is found in the plastid. The protein resides in the chloroplast thylakoid membrane. Functionally, component of the cytochrome b6-f complex, which mediates electron transfer between photosystem II (PSII) and photosystem I (PSI), cyclic electron flow around PSI, and state transitions. In Coleochaete orbicularis (Charophycean green alga), this protein is Cytochrome b6-f complex subunit 4.